The chain runs to 495 residues: Zinc finger and SCAN domain-containing protein 5B (495 aa).

A disordered region spans residues 1-40 (MAANWTLSWGQGGPCNSPGSDTPRSVASPETQLGNHDRNP). The span at 17–34 (SPGSDTPRSVASPETQLG) shows a compositional bias: polar residues. Residues 44 to 126 (HMNFRMFSCP…DLLRNNRRPK (83 aa)) form the SCAN box domain. Disordered stretches follow at residues 150 to 183 (APAS…RREQ) and 227 to 347 (ENRE…PDGQ). Over residues 161–173 (VSSQWASSVNQMH) the composition is skewed to polar residues. Positions 250–262 (RAKEGKEPQKRAS) are enriched in basic and acidic residues. Residues 292–310 (NLSSPKRSKPDASSISQEE) are compositionally biased toward polar residues. 5 C2H2-type zinc fingers span residues 355–377 (FACD…RRSH), 383–405 (FQCD…QRVH), 411–433 (YMCD…KRIH), 439–461 (FKCK…QRTH), and 467–489 (YKCP…LKTH).

It is found in the nucleus. In terms of biological role, may be involved in transcriptional regulation. This is Zinc finger and SCAN domain-containing protein 5B (ZSCAN5B) from Homo sapiens (Human).